The following is a 612-amino-acid chain: Rhamnogalacturonan exolyase YesX (612 aa).

Residue asparagine 119 coordinates substrate. Residues aspartate 120, aspartate 125, aspartate 127, aspartate 129, glutamate 131, and glutamate 133 each contribute to the Ca(2+) site. Positions 139, 154, and 174 each coordinate substrate. Ca(2+) contacts are provided by aspartate 189, aspartate 191, aspartate 193, lysine 195, and glutamate 197. Substrate is bound by residues glycine 205 and arginine 222. Positions 330, 336, 338, 340, 342, 344, 353, 354, 366, 368, 374, 376, 379, 381, 383, and 389 each coordinate Ca(2+). Arginine 419 serves as a coordination point for substrate. Ca(2+)-binding residues include aspartate 472, aspartate 474, valine 476, and glutamate 478. Residue 516–518 (NGT) participates in substrate binding. Ca(2+) is bound by residues asparagine 527, phenylalanine 529, aspartate 531, arginine 533, glutamate 535, asparagine 576, and alanine 578. Residue tyrosine 579 participates in substrate binding. Ca(2+) is bound at residue asparagine 580.

It belongs to the polysaccharide lyase 11 family. As to quaternary structure, monomer. Requires Mn(2+) as cofactor. Zn(2+) is required as a cofactor. Co(2+) serves as cofactor. It depends on Ca(2+) as a cofactor.

The protein localises to the secreted. It carries out the reaction Exotype eliminative cleavage of alpha-L-rhamnopyranosyl-(1-&gt;4)-alpha-D-galactopyranosyluronic acid bonds of rhamnogalacturonan I oligosaccharides containing alpha-L-rhamnopyranose at the reducing end and 4-deoxy-4,5-unsaturated D-galactopyranosyluronic acid at the non-reducing end. The products are the disaccharide 2-O-(4-deoxy-beta-L-threo-hex-4-enopyranuronosyl)-alpha-L-rhamnopyranose and the shortened rhamnogalacturonan oligosaccharide containing one 4-deoxy-4,5-unsaturated D-galactopyranosyluronic acid at the non-reducing end.. Functionally, pectinolytic enzyme that degrades type I rhamnogalacturonan from plant cell walls and releases disaccharide products. Degrades rhamnogalacturonan, polygalacturonic acid and pectic acid. Has very low activity on pectin. The chain is Rhamnogalacturonan exolyase YesX (yesX) from Bacillus subtilis (strain 168).